The chain runs to 356 residues: DNA polymerase IV (356 aa).

The 182-residue stretch at 6–187 (IIHIDMDYFF…LDIGDFPGVG (182 aa)) folds into the UmuC domain. Asp10 and Asp105 together coordinate Mg(2+). Glu106 is an active-site residue.

This sequence belongs to the DNA polymerase type-Y family. In terms of assembly, monomer. Requires Mg(2+) as cofactor.

It localises to the cytoplasm. It catalyses the reaction DNA(n) + a 2'-deoxyribonucleoside 5'-triphosphate = DNA(n+1) + diphosphate. Poorly processive, error-prone DNA polymerase involved in untargeted mutagenesis. Copies undamaged DNA at stalled replication forks, which arise in vivo from mismatched or misaligned primer ends. These misaligned primers can be extended by PolIV. Exhibits no 3'-5' exonuclease (proofreading) activity. May be involved in translesional synthesis, in conjunction with the beta clamp from PolIII. The chain is DNA polymerase IV from Staphylococcus aureus (strain COL).